Consider the following 277-residue polypeptide: Diaminopimelate epimerase (277 aa).

Substrate contacts are provided by Asn-13, Gln-46, and Asn-66. The active-site Proton donor is Cys-75. Residues 76–77 (GN), Asn-160, Asn-193, and 211–212 (ER) contribute to the substrate site. The active-site Proton acceptor is the Cys-220. 221-222 (GS) lines the substrate pocket.

The protein belongs to the diaminopimelate epimerase family. In terms of assembly, homodimer.

It is found in the cytoplasm. It catalyses the reaction (2S,6S)-2,6-diaminopimelate = meso-2,6-diaminopimelate. The protein operates within amino-acid biosynthesis; L-lysine biosynthesis via DAP pathway; DL-2,6-diaminopimelate from LL-2,6-diaminopimelate: step 1/1. In terms of biological role, catalyzes the stereoinversion of LL-2,6-diaminopimelate (L,L-DAP) to meso-diaminopimelate (meso-DAP), a precursor of L-lysine and an essential component of the bacterial peptidoglycan. The polypeptide is Diaminopimelate epimerase (Legionella pneumophila (strain Corby)).